The primary structure comprises 231 residues: 7-cyano-7-deazaguanine synthase (231 aa).

Residue 17–27 participates in ATP binding; sequence FSGGMDSFTLL. 4 residues coordinate Zn(2+): C193, C201, C204, and C207.

The protein belongs to the QueC family. It depends on Zn(2+) as a cofactor.

It carries out the reaction 7-carboxy-7-deazaguanine + NH4(+) + ATP = 7-cyano-7-deazaguanine + ADP + phosphate + H2O + H(+). It functions in the pathway purine metabolism; 7-cyano-7-deazaguanine biosynthesis. Functionally, catalyzes the ATP-dependent conversion of 7-carboxy-7-deazaguanine (CDG) to 7-cyano-7-deazaguanine (preQ(0)). The polypeptide is 7-cyano-7-deazaguanine synthase (Hahella chejuensis (strain KCTC 2396)).